The following is a 400-amino-acid chain: Multidrug resistance protein MdtH (400 aa).

The next 10 helical transmembrane spans lie at 13–33 (YFLLLDNMLVVLGFFVVFPLI), 34–54 (SIRFVEQLGWAGVIVGFALGL), 99–116 (PWILWLSCILSALGGTLF), 139–159 (LLLMQDSAGAVIGALIGSWLL), 165–185 (LVCWVGAGIFVLAAIFNAWLL), 214–234 (VLTLTGYFVLSVQVMLMFPIV), 244–264 (AVKWMYAIEALLSLTLLYPIA), 289–309 (FPVGITHSLHAIFLIITLFYL), 340–360 (LGLAFGGAIGYTGGGWMYDIG), and 365–385 (LPELPWFLLGSIGFITLYALH).

The protein belongs to the major facilitator superfamily. DHA1 family. MdtH (TC 2.A.1.2.21) subfamily.

It localises to the cell inner membrane. In Proteus mirabilis (strain HI4320), this protein is Multidrug resistance protein MdtH.